The primary structure comprises 417 residues: Voltage-gated ClC-type chloride channel ClcB (417 aa).

10 helical membrane passes run 5 to 25, 54 to 74, 146 to 166, 168 to 188, 222 to 242, 258 to 278, 288 to 308, 316 to 336, 349 to 371, and 380 to 400; these read LLIA…FRHA, LITP…WQKM, LWIA…PLAG, LFIA…PVVV, VMIV…MWLM, WQLA…PTVW, FLLS…KILA, GAPG…GMFL, EIAI…HAPI, and MTGE…ASVL.

It belongs to the chloride channel (TC 2.A.49) family. ClcB subfamily.

The protein resides in the cell inner membrane. In terms of biological role, probably acts as an electrical shunt for an outwardly-directed proton pump that is linked to amino acid decarboxylation, as part of the extreme acid resistance (XAR) response. The polypeptide is Voltage-gated ClC-type chloride channel ClcB (Salmonella dublin (strain CT_02021853)).